A 466-amino-acid polypeptide reads, in one-letter code: Communesin N16 acyltransferase cnsK (466 aa).

It belongs to the fumigaclavine B O-acetyltransferase family.

It participates in alkaloid biosynthesis. Its function is as follows. Communesin N16 acyltransferase; part of the gene cluster that mediates the biosynthesis of communesins, a prominent class of indole alkaloids with great potential as pharmaceuticals. Communesins are biosynthesized by the coupling of tryptamine and aurantioclavine, two building blocks derived from L-tryptophan. The L-tryptophan decarboxylase cnsB converts L-tryptophan to tryptamine, whereas the tryptophan dimethylallyltransferase cnsF converts L-tryptophan to 4-dimethylallyl tryptophan which is further transformed to aurantioclavine by the aurantioclavine synthase cnsA, probably aided by the catalase cnsD. The cytochrome P450 monooxygenase cnsC catalyzes the heterodimeric coupling between the two different indole moieties, tryptamine and aurantioclavine, to construct vicinal quaternary stereocenters and yield the heptacyclic communesin scaffold. The O-methyltransferase cnsE then methylates the communesin scaffold to produce communesin K, the simplest characterized communesin that contains the heptacyclic core. The dioxygenase cnsJ converts communesin K into communesin I. Acylation to introduce the hexadienyl group at position N16 of communesin I by the acyltransferase cnsK leads to the production of communesin B. The hexadienyl group is produced by the highly reducing polyketide synthase cnsI, before being hydrolytically removed from cnsI by the serine hydrolase cnsH, converted into hexadienyl-CoA by the CoA ligase cnsG, and then transferred to communesin I by cnsK. Surprisingly, cnsK may also be a promiscuous acyltransferase that can tolerate a range of acyl groups, including acetyl-, propionyl-, and butyryl-CoA, which lead to communesins A, G and H respectively. The roles of the alpha-ketoglutarate-dependent dioxygenases cnsM and cnsP have still to be determined. The sequence is that of Communesin N16 acyltransferase cnsK from Penicillium expansum (Blue mold rot fungus).